A 37-amino-acid chain; its full sequence is Large ribosomal subunit protein bL36c (37 aa).

Belongs to the bacterial ribosomal protein bL36 family.

It is found in the plastid. The protein localises to the chloroplast. The protein is Large ribosomal subunit protein bL36c (rpl36) of Chlorella vulgaris (Green alga).